The chain runs to 1138 residues: uncharacterized protein (1138 aa).

A signal peptide spans 1–28 (MKLFPRSILIILVLSFALNLGLVTKTHA). 7 helical membrane passes run 331-351 (IVTA…LLAG), 359-379 (YINF…INIT), 392-412 (MIQW…SWVM), 494-514 (MLVS…AFMV), 520-540 (CMIS…MFLF), 554-574 (MISF…MFSV), and 699-719 (IKNI…MYNF). Gly residues predominate over residues 775-784 (DLKAGQGGGV). Disordered regions lie at residues 775 to 914 (DLKA…KGTG), 958 to 977 (GGGR…RTNA), and 995 to 1071 (ERDN…KQIR). The segment covering 801–830 (AASGGTSAPTVTTPTASSSVATSSPKTVSS) has biased composition (low complexity). A compositionally biased stretch (pro residues) spans 838–852 (TPPPAPSEAVSPPPA). Over residues 854–869 (IRTSISTPAPQSNIET) the composition is skewed to polar residues. Basic and acidic residues-rich tracts occupy residues 875–888 (IIRD…KEID), 961–977 (RIRD…RTNA), 995–1032 (ERDN…RKEN), and 1058–1071 (LKEH…KQIR).

It belongs to the TrbL/VirB6 family.

The protein localises to the cell membrane. This is an uncharacterized protein from Rickettsia felis (strain ATCC VR-1525 / URRWXCal2) (Rickettsia azadi).